The primary structure comprises 205 residues: Thymidylate kinase (205 aa).

9 to 16 (GPEGSGKT) contacts ATP.

The protein belongs to the thymidylate kinase family.

The catalysed reaction is dTMP + ATP = dTDP + ADP. In terms of biological role, phosphorylation of dTMP to form dTDP in both de novo and salvage pathways of dTTP synthesis. The polypeptide is Thymidylate kinase (Staphylococcus aureus (strain NCTC 8325 / PS 47)).